The following is a 147-amino-acid chain: Large ribosomal subunit protein uL11 (147 aa).

This sequence belongs to the universal ribosomal protein uL11 family. Part of the ribosomal stalk of the 50S ribosomal subunit. Interacts with L10 and the large rRNA to form the base of the stalk. L10 forms an elongated spine to which L12 dimers bind in a sequential fashion forming a multimeric L10(L12)X complex. One or more lysine residues are methylated.

Its function is as follows. Forms part of the ribosomal stalk which helps the ribosome interact with GTP-bound translation factors. The protein is Large ribosomal subunit protein uL11 of Metamycoplasma arthritidis (strain 158L3-1) (Mycoplasma arthritidis).